The primary structure comprises 397 residues: ATP-dependent RNA helicase eIF4A (397 aa).

The Q motif signature appears at 24–52 (DSFDDMNLKSELLRGIYAYGFERPSAIQQ). The Helicase ATP-binding domain occupies 55–225 (IMPVIKGHDV…TKFMRDPVRI (171 aa)). 68-75 (AQSGTGKT) serves as a coordination point for ATP. The DEAD box motif lies at 173-176 (DEAD). Positions 236 to 397 (GIKQFYIAVE…EMPMNVADLI (162 aa)) constitute a Helicase C-terminal domain.

Belongs to the DEAD box helicase family. eIF4A subfamily. As to quaternary structure, component of the eIF4F complex, which composition varies with external and internal environmental conditions. It is composed of at least eIF4A, eIF4E and eIF4G.

Its subcellular location is the cytoplasm. It catalyses the reaction ATP + H2O = ADP + phosphate + H(+). Its function is as follows. ATP-dependent RNA helicase which is a subunit of the eIF4F complex involved in cap recognition and is required for mRNA binding to ribosome. In the current model of translation initiation, eIF4A unwinds RNA secondary structures in the 5'-UTR of mRNAs which is necessary to allow efficient binding of the small ribosomal subunit, and subsequent scanning for the initiator codon. The polypeptide is ATP-dependent RNA helicase eIF4A (TIF1) (Chaetomium globosum (strain ATCC 6205 / CBS 148.51 / DSM 1962 / NBRC 6347 / NRRL 1970) (Soil fungus)).